The chain runs to 949 residues: Glycine dehydrogenase (decarboxylating) (949 aa).

Lys-704 carries the N6-(pyridoxal phosphate)lysine modification.

This sequence belongs to the GcvP family. In terms of assembly, the glycine cleavage system is composed of four proteins: P, T, L and H. Requires pyridoxal 5'-phosphate as cofactor.

The enzyme catalyses N(6)-[(R)-lipoyl]-L-lysyl-[glycine-cleavage complex H protein] + glycine + H(+) = N(6)-[(R)-S(8)-aminomethyldihydrolipoyl]-L-lysyl-[glycine-cleavage complex H protein] + CO2. Its function is as follows. The glycine cleavage system catalyzes the degradation of glycine. The P protein binds the alpha-amino group of glycine through its pyridoxal phosphate cofactor; CO(2) is released and the remaining methylamine moiety is then transferred to the lipoamide cofactor of the H protein. The protein is Glycine dehydrogenase (decarboxylating) of Bacteroides fragilis (strain ATCC 25285 / DSM 2151 / CCUG 4856 / JCM 11019 / LMG 10263 / NCTC 9343 / Onslow / VPI 2553 / EN-2).